The primary structure comprises 721 residues: MQGKTQSISFDGREIRLTTGRFAPQAGGSVLVECGDTAVLVTATRSKGRDGIDFLPLICDYEERLYAAGRIPGSYMRREARPPERATLTCRLIDRPMRPLFPSWMRDDLQVVATCLSLDERVPSDVLAVTGASIATLLAGIPFNGPMAAVRVGLLGDDFVLNPSYREIERGDLDLVVAGTADGVVMVEAGANQLPEGDVIEAIDFGYEAIQELIKAQETLLKDLGIKQVKPEAPKEDTTVPAYLEKQCTKAISAVLSKFEQSKEDRDNGLEAVKADAAEAIAALKEDDAVRQAVSSSSKLLGNSFKALTKKLMRQQILKDGKRVDGRGLDEVRQISAMAGVLPRRVHGSGLFQRGLTQVLSTATLGTPSDAQEMDDLHPNTEKLYLHHYNFPPYSVGETRPMRSPGRREIGHGALAERAILPVLPEKDTFPYVVRVVSEVLSSNGSTSMGSVCGSTLALMDAGVPLKAPVSGAAMGLIKEGKDIKILTDIQGIEDFLGDMDFKVAGSEKGITALQMDMKITGLPVKVMAEAVNQARPARLHILEKMLEAIDKPRETLSPHAPRLLSFRIDPELIGTVIGPGGRTIKGITERTNTKIDIEDSGIVTIASHDGAAAEEAQKIIEGLTRKVNEGEMFSGSITRIIPIGAFVEILPGKEGMIHISQLSEARVEKVEDVVKVGDEVTVRVREIDNRGRINLTLRGVPQSGESTEVEPQPTPVAPLS.

Mg(2+) is bound by residues Asp-495 and Asp-501. The KH domain occupies 562–621; the sequence is PRLLSFRIDPELIGTVIGPGGRTIKGITERTNTKIDIEDSGIVTIASHDGAAAEEAQKII. One can recognise an S1 motif domain in the interval 631-699; it reads GEMFSGSITR…NRGRINLTLR (69 aa). The tract at residues 700–721 is disordered; sequence GVPQSGESTEVEPQPTPVAPLS.

Belongs to the polyribonucleotide nucleotidyltransferase family. Mg(2+) is required as a cofactor.

It localises to the cytoplasm. The catalysed reaction is RNA(n+1) + phosphate = RNA(n) + a ribonucleoside 5'-diphosphate. Functionally, involved in mRNA degradation. Catalyzes the phosphorolysis of single-stranded polyribonucleotides processively in the 3'- to 5'-direction. The protein is Polyribonucleotide nucleotidyltransferase of Synechococcus sp. (strain CC9902).